The sequence spans 448 residues: Integrator complex subunit 15 (448 aa).

It belongs to the Integrator subunit 15 family. In terms of assembly, component of the Integrator complex, composed of core subunits INTS1, INTS2, INTS3, INTS4, INTS5, INTS6, INTS7, INTS8, INTS9/RC74, INTS10, INTS11/CPSF3L, INTS12, INTS13, INTS14 and INTS15. The core complex associates with protein phosphatase 2A subunits PPP2CA and PPP2R1A, to form the Integrator-PP2A (INTAC) complex. INTS15 is part of the tail subcomplex, composed of INTS10, INTS13, INTS14 and INTS15.

It is found in the nucleus. The protein resides in the chromosome. Component of the integrator complex, a multiprotein complex that terminates RNA polymerase II (Pol II) transcription in the promoter-proximal region of genes. The integrator complex provides a quality checkpoint during transcription elongation by driving premature transcription termination of transcripts that are unfavorably configured for transcriptional elongation: the complex terminates transcription by (1) catalyzing dephosphorylation of the C-terminal domain (CTD) of Pol II subunit POLR2A/RPB1 and SUPT5H/SPT5, (2) degrading the exiting nascent RNA transcript via endonuclease activity and (3) promoting the release of Pol II from bound DNA. The integrator complex is also involved in terminating the synthesis of non-coding Pol II transcripts, such as enhancer RNAs (eRNAs), small nuclear RNAs (snRNAs), telomerase RNAs and long non-coding RNAs (lncRNAs). INTS15 is part of the integrator tail module that acts as a platform for the recruitment of transcription factors at promoters. Within the integrator complex, INTS15 is required to bridge different integrator modules. The polypeptide is Integrator complex subunit 15 (Mus musculus (Mouse)).